The following is a 247-amino-acid chain: tRNA pseudouridine synthase A (247 aa).

Asp52 acts as the Nucleophile in catalysis. Residue Tyr113 participates in substrate binding.

This sequence belongs to the tRNA pseudouridine synthase TruA family. Homodimer.

It catalyses the reaction uridine(38/39/40) in tRNA = pseudouridine(38/39/40) in tRNA. Its function is as follows. Formation of pseudouridine at positions 38, 39 and 40 in the anticodon stem and loop of transfer RNAs. This is tRNA pseudouridine synthase A from Rhizobium meliloti (strain 1021) (Ensifer meliloti).